A 300-amino-acid chain; its full sequence is Ribosomal RNA small subunit methyltransferase H (300 aa).

S-adenosyl-L-methionine contacts are provided by residues 35–37 (GGH), Asp-55, Phe-82, Asp-100, and Gln-107.

This sequence belongs to the methyltransferase superfamily. RsmH family.

Its subcellular location is the cytoplasm. It carries out the reaction cytidine(1402) in 16S rRNA + S-adenosyl-L-methionine = N(4)-methylcytidine(1402) in 16S rRNA + S-adenosyl-L-homocysteine + H(+). Its function is as follows. Specifically methylates the N4 position of cytidine in position 1402 (C1402) of 16S rRNA. In Chlamydia trachomatis serovar L2 (strain ATCC VR-902B / DSM 19102 / 434/Bu), this protein is Ribosomal RNA small subunit methyltransferase H.